Consider the following 681-residue polypeptide: Nucleolar GTP-binding protein 1 (681 aa).

In terms of domain architecture, OBG-type G spans 170 to 341; sequence RTLILCGFPN…LRDRACDELL (172 aa). GTP-binding positions include 176–183, 222–226, and 290–293; these read GFPNVGKS, DTPGI, and NKVD.

Belongs to the TRAFAC class OBG-HflX-like GTPase superfamily. OBG GTPase family. NOG subfamily. Ubiquitously expressed.

Its subcellular location is the nucleus. The protein resides in the nucleolus. Functionally, involved in the biogenesis of the 60S ribosomal subunit. Has a role in regulating longevity, growth and brood size. May regulate fat storage via the insulin/IGF pathway. This is Nucleolar GTP-binding protein 1 from Caenorhabditis elegans.